A 98-amino-acid polypeptide reads, in one-letter code: Cytochrome b (98 aa).

3 helical membrane-spanning segments follow: residues 1–18 (LLGLCLITQILTGLFLAM), 42–63 (WLIRNVHANGASFFFICLYLHV), and 78–98 (WNIGVVLLLLTMMTAFVGYVL). Residues H48 and H62 each contribute to the heme b site.

It belongs to the cytochrome b family. In terms of assembly, the cytochrome bc1 complex contains 3 respiratory subunits (MT-CYB, CYC1 and UQCRFS1), 2 core proteins (UQCRC1 and UQCRC2) and probably 6 low-molecular weight proteins. Heme b is required as a cofactor.

Its subcellular location is the mitochondrion inner membrane. Functionally, component of the ubiquinol-cytochrome c reductase complex (complex III or cytochrome b-c1 complex) that is part of the mitochondrial respiratory chain. The b-c1 complex mediates electron transfer from ubiquinol to cytochrome c. Contributes to the generation of a proton gradient across the mitochondrial membrane that is then used for ATP synthesis. The polypeptide is Cytochrome b (mt-cyb) (Scaphirhynchus platorynchus (Shovelnose sturgeon)).